The following is a 92-amino-acid chain: Small ribosomal subunit protein uS17 (92 aa).

The protein belongs to the universal ribosomal protein uS17 family. Part of the 30S ribosomal subunit.

In terms of biological role, one of the primary rRNA binding proteins, it binds specifically to the 5'-end of 16S ribosomal RNA. The polypeptide is Small ribosomal subunit protein uS17 (Corynebacterium urealyticum (strain ATCC 43042 / DSM 7109)).